A 337-amino-acid chain; its full sequence is tRNA N6-adenosine threonylcarbamoyltransferase (337 aa).

Positions 111 and 115 each coordinate Fe cation. Substrate-binding positions include 134-138, Asp-167, Gly-180, and Asn-272; that span reads LVSGG. Asp-300 is a Fe cation binding site.

It belongs to the KAE1 / TsaD family. The cofactor is Fe(2+).

The protein localises to the cytoplasm. It carries out the reaction L-threonylcarbamoyladenylate + adenosine(37) in tRNA = N(6)-L-threonylcarbamoyladenosine(37) in tRNA + AMP + H(+). Functionally, required for the formation of a threonylcarbamoyl group on adenosine at position 37 (t(6)A37) in tRNAs that read codons beginning with adenine. Is involved in the transfer of the threonylcarbamoyl moiety of threonylcarbamoyl-AMP (TC-AMP) to the N6 group of A37, together with TsaE and TsaB. TsaD likely plays a direct catalytic role in this reaction. This is tRNA N6-adenosine threonylcarbamoyltransferase from Shewanella woodyi (strain ATCC 51908 / MS32).